A 784-amino-acid polypeptide reads, in one-letter code: SWI/SNF complex subunit SWI3C homolog (784 aa).

A compositionally biased stretch (polar residues) spans M1–D10. Residues M1–A68 are disordered. Residues A24–A39 are compositionally biased toward low complexity. Residues D43–T66 show a composition bias toward acidic residues. In terms of domain architecture, SWIRM spans H185–G284. A ZZ-type; degenerate zinc finger spans residues L355 to D409. Positions 360, 363, 383, and 386 each coordinate Zn(2+). The SANT domain maps to N413–G464. 2 disordered regions span residues L667–Q702 and G760–G784. The span at P675–G695 shows a compositional bias: low complexity.

In terms of assembly, interacts with LFR. Interacts with NMCP1.

The protein resides in the nucleus. Its subcellular location is the nucleoplasm. Component of a multiprotein complex equivalent of the SWI/SNF complex, an ATP-dependent chromatin-remodeling complex, which is required for the positive and negative regulation of gene expression of a large number of genes. It changes chromatin structure by altering DNA-histone contacts within a nucleosome, leading eventually to a change in nucleosome position, thus facilitating or repressing binding of gene-specific transcription factors. May be involved in positive response to drought stress and modulation of root growth through its interaction with NMCP1. The polypeptide is SWI/SNF complex subunit SWI3C homolog (Oryza sativa subsp. japonica (Rice)).